The following is a 341-amino-acid chain: Very-long-chain 3-oxoacyl-CoA reductase (341 aa).

A helical membrane pass occupies residues 22 to 42 (AIYGFLLAGVAAFAAPIVSTI). Residues L67, D123, D131, N150, Y217, K221, I250, and T252 each contribute to the NADP(+) site. Catalysis depends on Y217, which acts as the Proton donor. K221 acts as the Lowers pKa of active site Tyr in catalysis.

It belongs to the short-chain dehydrogenases/reductases (SDR) family.

The protein localises to the endoplasmic reticulum membrane. It catalyses the reaction a very-long-chain (3R)-3-hydroxyacyl-CoA + NADP(+) = a very-long-chain 3-oxoacyl-CoA + NADPH + H(+). It functions in the pathway lipid metabolism; fatty acid biosynthesis. Functionally, component of the microsomal membrane bound fatty acid elongation system, which produces the 26-carbon very long-chain fatty acids (VLCFA) from palmitate. Catalyzes the reduction of the 3-ketoacyl-CoA intermediate that is formed in each cycle of fatty acid elongation. VLCFAs serve as precursors for ceramide and sphingolipids. This chain is Very-long-chain 3-oxoacyl-CoA reductase, found in Phaeosphaeria nodorum (strain SN15 / ATCC MYA-4574 / FGSC 10173) (Glume blotch fungus).